We begin with the raw amino-acid sequence, 859 residues long: MEQTEGVSTECAKAIKPIDGKSVHQICSGQVVLSLSTAVKELIENSVDAGATTIDLRLKDYGVDLIEVSDNGCGVEEENFEGLALKHHTSKIQEFADLTQVETFGFRGEALSSLCALSDVTISTCHGSASVGTRLVFDHNGKITQKTPYPRPKGTTVSVQHLFYTLPVRYKEFQRNIKKEYAKMVQVLQAYCIISAGVRVSCTNQLGQGKRQPVVCTSGSSGMKENIGSVFGQKQLQSLIPFVQLPPSDAVCEEYGLSTSRTPQNLFYVSGFISQCTHGAGRSATDRQFFFINQRPCDPAKVSKLVNEVYHMYNRHQYPFVVLNVSVDSECVDINVTPDKRQILLQEEKLLLAVLKTSLIGMFDSDANKLNVNQQPLLDVEGNLVKLHTAELEKPVPGKQDNSPSLKSTADEKRVASISRLREAFSLHPTKEIKSRGPETAELTRSFPSEKRGVLSSYPSDVISYRGLRGSQDKLVSPTDSPGDCMDREKIEKDSGLSSTSAGSEEGFSTPEVASSFSSDYNVSSPEDRPSQETINCGDLDCRPPGTGQSLKPEDHGYQCKALPLARLSPTNAKRFKTEERPSNVNISQRLPGPQSTSAAEVDVAIKMNKRIVLLEFSLSSLAKRMKQLQHLKAQNKHELSYRKFRAKICPGENQAAEDELRKEISKSMFAEMEILGQFNLGFIVTKLKEDLFLVDQHAADEKYNFEMLQQHTVLQAQRLITPQTLNLTAVNEAVLIENLEIFRKNGFDFVIDEDAPVTERAKLISLPTSKNWTFGPQDIDELIFMLSDSPGVMCRPSRVRQMFASRACRKSVMIGTALNASEMKKLITHMGEMDHPWNCPHGRPTMRHVANLDVISQN.

ATP-binding residues include N45, D70, E109, A110, and L111. Disordered stretches follow at residues 391–413 (ELEK…ADEK), 427–455 (LHPT…RGVL), and 469–555 (RGSQ…KPED). Composition is skewed to basic and acidic residues over residues 427–439 (LHPT…RGPE) and 485–495 (CMDREKIEKDS). Residues 512-525 (EVASSFSSDYNVSS) are compositionally biased toward polar residues. Positions 574–577 (KRFK) match the Nuclear localization signal motif. A disordered region spans residues 578 to 597 (TEERPSNVNISQRLPGPQST). A compositionally biased stretch (polar residues) spans 583 to 597 (SNVNISQRLPGPQST).

Belongs to the DNA mismatch repair MutL/HexB family. Heterodimer of PMS2 and MLH1 (MutL alpha); this interaction is required for the stability of both partners. Forms a ternary complex with MutS alpha (MSH2-MSH6) or MutS beta (MSH2-MSH3). Part of the BRCA1-associated genome surveillance complex (BASC), which contains BRCA1, MSH2, MSH6, MLH1, ATM, BLM, PMS2 and the RAD50-MRE11-NBS1 protein complex. This association could be a dynamic process changing throughout the cell cycle and within subnuclear domains. Interacts with MTMR15/FAN1.

It is found in the nucleus. The enzyme catalyses ATP + H2O = ADP + phosphate + H(+). In terms of biological role, component of the post-replicative DNA mismatch repair system (MMR). Heterodimerizes with MLH1 to form MutL alpha. DNA repair is initiated by MutS alpha (MSH2-MSH6) or MutS beta (MSH2-MSH3) binding to a dsDNA mismatch, then MutL alpha is recruited to the heteroduplex. Assembly of the MutL-MutS-heteroduplex ternary complex in presence of RFC and PCNA is sufficient to activate endonuclease activity of PMS2. It introduces single-strand breaks near the mismatch and thus generates new entry points for the exonuclease EXO1 to degrade the strand containing the mismatch. DNA methylation would prevent cleavage and therefore assure that only the newly mutated DNA strand is going to be corrected. MutL alpha (MLH1-PMS2) interacts physically with the clamp loader subunits of DNA polymerase III, suggesting that it may play a role to recruit the DNA polymerase III to the site of the MMR. Also implicated in DNA damage signaling, a process which induces cell cycle arrest and can lead to apoptosis in case of major DNA damages. Possesses an ATPase activity, but in the absence of gross structural changes, ATP hydrolysis may not be necessary for proficient mismatch repair. The polypeptide is Mismatch repair endonuclease PMS2 (Mus musculus (Mouse)).